The following is a 311-amino-acid chain: Aspartate carbamoyltransferase catalytic subunit (311 aa).

2 residues coordinate carbamoyl phosphate: Arg55 and Thr56. Lys85 serves as a coordination point for L-aspartate. Arg106, His135, and Gln138 together coordinate carbamoyl phosphate. Arg168 and Arg230 together coordinate L-aspartate. Leu268 and Pro269 together coordinate carbamoyl phosphate.

This sequence belongs to the aspartate/ornithine carbamoyltransferase superfamily. ATCase family. In terms of assembly, heterododecamer (2C3:3R2) of six catalytic PyrB chains organized as two trimers (C3), and six regulatory PyrI chains organized as three dimers (R2).

It carries out the reaction carbamoyl phosphate + L-aspartate = N-carbamoyl-L-aspartate + phosphate + H(+). It functions in the pathway pyrimidine metabolism; UMP biosynthesis via de novo pathway; (S)-dihydroorotate from bicarbonate: step 2/3. Functionally, catalyzes the condensation of carbamoyl phosphate and aspartate to form carbamoyl aspartate and inorganic phosphate, the committed step in the de novo pyrimidine nucleotide biosynthesis pathway. In Proteus mirabilis (strain HI4320), this protein is Aspartate carbamoyltransferase catalytic subunit.